The chain runs to 316 residues: Ribosomal RNA large subunit methyltransferase F (316 aa).

Positions 200–222 are disordered; sequence EEANKSTSRKVSNLNPKEKKNTN. A compositionally biased stretch (polar residues) spans 204–214; it reads KSTSRKVSNLN.

The protein belongs to the methyltransferase superfamily. METTL16/RlmF family.

The protein resides in the cytoplasm. It carries out the reaction adenosine(1618) in 23S rRNA + S-adenosyl-L-methionine = N(6)-methyladenosine(1618) in 23S rRNA + S-adenosyl-L-homocysteine + H(+). Specifically methylates the adenine in position 1618 of 23S rRNA. This is Ribosomal RNA large subunit methyltransferase F from Flavobacterium johnsoniae (strain ATCC 17061 / DSM 2064 / JCM 8514 / BCRC 14874 / CCUG 350202 / NBRC 14942 / NCIMB 11054 / UW101) (Cytophaga johnsonae).